We begin with the raw amino-acid sequence, 423 residues long: MITWPAPQVPSIPGALTSVRVMDTSSGQLVETVRPGVGESSMYVCGITPYDATHIGHAATYIAFDLLYRAWLDAGQRVVYTSNVTDVDDPLLERATATGVDWTELATSQITLFFDDMSALGVLPPHTYLSAVESVPMVISATRHLLESGRAYRVPVPAQERPVHSPAYDIYADVTSDPDFGSISGYTSEERVRLFTDRGGDPATPGKKNPIDPIMWKAQREGEPGWDGDDLGWGRPGWHIECTTIAHCGIGRSCTVQGGGSDLIFPHHEMSSAHARALFGQDAGASVHAHAGLIAYQGEKMSKSKGNLVFVSRLRQEGVDPMAIRLAILANHYRDEWEWTSDVLDAGIKRHQLWLQAMSTNGGPHPGATLAAMREALSNDLDAPRALDAVDAWAYATLAGNDEDPGAPGVVSRAVNALLGIRL.

Cysteine 45 serves as a coordination point for Zn(2+). L-cysteinyl-5'-AMP contacts are provided by residues 45–48 (CGIT), threonine 60, and 83–85 (NVT). A 'HIGH' region motif is present at residues 47 to 57 (ITPYDATHIGH). The 'ERGGDP' region motif lies at 197–202 (DRGGDP). Residue tryptophan 238 participates in L-cysteinyl-5'-AMP binding. Cysteine 242 serves as a coordination point for Zn(2+). 260–262 (GSD) contributes to the L-cysteinyl-5'-AMP binding site. Histidine 267 is a binding site for Zn(2+). An L-cysteinyl-5'-AMP-binding site is contributed by isoleucine 294. Residues 300–304 (KMSKS) carry the 'KMSKS' region motif.

This sequence belongs to the class-I aminoacyl-tRNA synthetase family. MshC subfamily. Monomer. Zn(2+) is required as a cofactor.

The enzyme catalyses 1D-myo-inositol 2-amino-2-deoxy-alpha-D-glucopyranoside + L-cysteine + ATP = 1D-myo-inositol 2-(L-cysteinylamino)-2-deoxy-alpha-D-glucopyranoside + AMP + diphosphate + H(+). Functionally, catalyzes the ATP-dependent condensation of GlcN-Ins and L-cysteine to form L-Cys-GlcN-Ins. The polypeptide is L-cysteine:1D-myo-inositol 2-amino-2-deoxy-alpha-D-glucopyranoside ligase (Jonesia denitrificans (strain ATCC 14870 / DSM 20603 / BCRC 15368 / CIP 55.134 / JCM 11481 / NBRC 15587 / NCTC 10816 / Prevot 55134) (Listeria denitrificans)).